A 336-amino-acid polypeptide reads, in one-letter code: Mitochondrial amidoxime reducing component 2 (336 aa).

The N-terminal 35 residues, 1-35 (MGAAGSSALARLGLPALPGPRWLGVAALGLAAVAL), are a transit peptide targeting the mitochondrion. Glycyl lysine isopeptide (Lys-Gly) (interchain with G-Cter in ubiquitin) cross-links involve residues K138, K144, K173, K187, K287, and K294. The 147-residue stretch at 188 to 334 (ARASNEIFPS…LKVGDPVYQM (147 aa)) folds into the MOSC domain.

As to quaternary structure, component of a complex composed of cytochrome b5, NADH-cytochrome b5 reductase (CYB5R3) and MTARC2. It depends on Mo-molybdopterin as a cofactor. In terms of processing, ubiquitinated by PRKN during mitophagy, leading to its degradation and enhancement of mitophagy. Deubiquitinated by USP30.

Its subcellular location is the mitochondrion outer membrane. It localises to the peroxisome. The catalysed reaction is N(omega)-hydroxy-L-arginine + 2 Fe(II)-[cytochrome b5] + 2 H(+) = L-arginine + 2 Fe(III)-[cytochrome b5] + H2O. Its function is as follows. Catalyzes the reduction of N-oxygenated molecules, acting as a counterpart of cytochrome P450 and flavin-containing monooxygenases in metabolic cycles. As a component of prodrug-converting system, reduces a multitude of N-hydroxylated prodrugs particularly amidoximes, leading to increased drug bioavailability. May be involved in mitochondrial N(omega)-hydroxy-L-arginine (NOHA) reduction, regulating endogenous nitric oxide levels and biosynthesis. Postulated to cleave the N-OH bond of N-hydroxylated substrates in concert with electron transfer from NADH to cytochrome b5 reductase then to cytochrome b5, the ultimate electron donor that primes the active site for substrate reduction. This Bos taurus (Bovine) protein is Mitochondrial amidoxime reducing component 2 (MTARC2).